The chain runs to 141 residues: Mu-like prophage FluMu protein gp36 (141 aa).

The protein to phage Mu protein gp36.

This Haemophilus influenzae (strain ATCC 51907 / DSM 11121 / KW20 / Rd) protein is Mu-like prophage FluMu protein gp36.